Here is a 185-residue protein sequence, read N- to C-terminus: Large ribosomal subunit protein uL5 (185 aa).

The protein belongs to the universal ribosomal protein uL5 family. Part of the 50S ribosomal subunit; part of the 5S rRNA/L5/L18/L25 subcomplex. Contacts the 5S rRNA and the P site tRNA. Forms a bridge to the 30S subunit in the 70S ribosome.

In terms of biological role, this is one of the proteins that bind and probably mediate the attachment of the 5S RNA into the large ribosomal subunit, where it forms part of the central protuberance. In the 70S ribosome it contacts protein S13 of the 30S subunit (bridge B1b), connecting the 2 subunits; this bridge is implicated in subunit movement. Contacts the P site tRNA; the 5S rRNA and some of its associated proteins might help stabilize positioning of ribosome-bound tRNAs. The protein is Large ribosomal subunit protein uL5 of Azorhizobium caulinodans (strain ATCC 43989 / DSM 5975 / JCM 20966 / LMG 6465 / NBRC 14845 / NCIMB 13405 / ORS 571).